A 344-amino-acid polypeptide reads, in one-letter code: Arginine N-succinyltransferase (344 aa).

Residue Leu-125 participates in succinyl-CoA binding. The active-site Proton donor is the His-229.

This sequence belongs to the arginine N-succinyltransferase family.

It catalyses the reaction succinyl-CoA + L-arginine = N(2)-succinyl-L-arginine + CoA + H(+). The protein operates within amino-acid degradation; L-arginine degradation via AST pathway; L-glutamate and succinate from L-arginine: step 1/5. In terms of biological role, catalyzes the transfer of succinyl-CoA to arginine to produce N(2)-succinylarginine. This chain is Arginine N-succinyltransferase, found in Escherichia coli O127:H6 (strain E2348/69 / EPEC).